A 104-amino-acid polypeptide reads, in one-letter code: Large ribosomal subunit protein uL24 (104 aa).

The protein belongs to the universal ribosomal protein uL24 family. As to quaternary structure, part of the 50S ribosomal subunit.

Its function is as follows. One of two assembly initiator proteins, it binds directly to the 5'-end of the 23S rRNA, where it nucleates assembly of the 50S subunit. In terms of biological role, one of the proteins that surrounds the polypeptide exit tunnel on the outside of the subunit. This is Large ribosomal subunit protein uL24 from Chromobacterium violaceum (strain ATCC 12472 / DSM 30191 / JCM 1249 / CCUG 213 / NBRC 12614 / NCIMB 9131 / NCTC 9757 / MK).